Consider the following 1242-residue polypeptide: Reverse gyrase 1 (1242 aa).

An RG N-terminal-type zinc finger spans residues 6–46 (KVPPSIYTRSCPNCGGNISSQRLFNGSVCESCLKDDREFSN). Zn(2+) is bound by residues Cys-16, Cys-19, Cys-34, and Cys-37. ATP-binding positions include Gln-93 and 110 to 117 (APPGLGKT). Positions 97–298 (TIRFLRGESF…SLMGFRPGSS (202 aa)) constitute a Helicase ATP-binding domain. The DEAD box motif lies at 214 to 217 (DDVD). The segment at 615–1242 (LSVKTTLFIV…ELYNEIQTIS (628 aa)) is topoisomerase I. Residues 619 to 785 (TTLFIVESPN…NIKRAEFHEV (167 aa)) form the Toprim domain. Residue Glu-625 participates in Mg(2+) binding. An RG C-terminal-type; atypical zinc finger spans residues 703-731 (IKKCEKGHQIVKDLSQNKCPICGSRIVTD). Positions 706, 710, 721, and 724 each coordinate Zn(2+). Asp-754 contacts Mg(2+). In terms of domain architecture, Topo IA-type catalytic spans 801-1242 (NDNLVKSQIV…ELYNEIQTIS (442 aa)). Catalysis depends on Tyr-965, which acts as the O-(5'-phospho-DNA)-tyrosine intermediate.

In the N-terminal section; belongs to the DEAD box helicase family. DDVD subfamily. The protein in the C-terminal section; belongs to the type IA topoisomerase family. In terms of assembly, monomer. Zn(2+) serves as cofactor. Requires Mg(2+) as cofactor.

The protein resides in the cytoplasm. It catalyses the reaction ATP + H2O = ADP + phosphate + H(+). With respect to regulation, at least one of the two reverse gyrase proteins is inhibited by actinomycin D. Highly sensitive to NaCl concentrations, maximal positive supercoiling is observed with 10 mM NaCl; as NaCl rises, supercoiling decreases. At 300 mM NaCl relaxes but does not introduce positive supercoils into negatively supercoiled substrate, at 400 mM NaCl does not relax DNA. Its function is as follows. Modifies the topological state of DNA by introducing positive supercoils in an ATP-dependent process. Increases the linking number in steps of +1. Involved in homeostatic control of DNA topology in balance with type II topoisomerase 6 (TopoVI); levels of TopoVI are constant at 80 and 88 degrees Celsius and TopoVI is probably less active at 88 degrees (characterized enzyme is from S.shibatae B12), so reverse gyrase mediates most of the fine-tuning of DNA topology. Changes the DNA linking number step-by-step in a distributive manner. At low protein to DNA ratios mostly relaxes negatively supercoiled substrate, as ratios rise more positive supercoils are introduced. At 90 degrees Celsius introduces 19 positive supercoils into pTZ18R DNA (probably 2860 bp), less than TopR2. Relaxes negatively supercoiled DNA in the absence of ATP. It cleaves transiently a single DNA strand and remains covalently bound to the 5' DNA end through a tyrosine residue. May be involved in DNA damage response. Its activity is inhibited by the DNA-binding protein 7d (Sso7d), suggesting that the Sso7d activity might counteract the overwinding effect of reverse gyrase. In terms of biological role, resolves 4-way Holliday junctions (HJ) with 20 bases in each arm in vitro, distorting the junction. Very high protein levels are required, but total enzyme content of the cell (there are 2 reverse gyrases in this organism) is estimated to be 20-200 molecules/cell. HJ resolution does not require either ATPase activity or the active tyrosine. The individual domains do not resolve HJs but do so when mixed. Also unwinds a fork substrate. There are 2 genes for this protein in the cell. During exponential growth this is the less expressed isoform (about 52 molecules per cell at 80 degrees Celsius, about 28 molecules at 88 degrees Celsius); this isoform is more active at higher temperature. Grows actively at both 80 and 88 degrees Celsius; survives a long exposure at 45 degrees Celsius without DNA replication or cell division occurring. Experiments using whole cell extracts do not distinguish which isoform is present, the results are probably a mixture of the two forms. The chain is Reverse gyrase 1 from Saccharolobus solfataricus (strain ATCC 35092 / DSM 1617 / JCM 11322 / P2) (Sulfolobus solfataricus).